A 555-amino-acid polypeptide reads, in one-letter code: Serine/threonine-protein kinase AGC1-7 (555 aa).

The interval 1 to 126 (MLTKPGKKLD…PSKPHTGGDI (126 aa)) is disordered. Composition is skewed to basic and acidic residues over residues 7 to 16 (KKLDSSESTH) and 35 to 54 (PRKE…DNLI). Positions 84 to 118 (SQSNLNTKPNNNNSNNNSNMSSRSNSIESTSSNPS) are enriched in low complexity. The 335-residue stretch at 146–480 (FRLLKRLGYG…ATEIKQHPFF (335 aa)) folds into the Protein kinase domain. ATP is bound by residues 152 to 160 (LGYGDIGSV) and K175. The active-site Proton acceptor is the D271. Residues 481 to 555 (EGVNWALIRS…DPDYIDFEYF (75 aa)) form the AGC-kinase C-terminal domain. A disordered region spans residues 514-547 (AAVDGGGKKNNNGAGGGCSTGGGDNKPNGDCNDP). A compositionally biased stretch (gly residues) spans 526 to 537 (GAGGGCSTGGGD).

It belongs to the protein kinase superfamily. AGC Ser/Thr protein kinase family. As to quaternary structure, interacts with PDPK1/PDK1. In terms of processing, autophosphorylated and phosphorylated by PDPK1/PDK1. As to expression, specifically expressed in pollen grains.

It is found in the cytoplasm. The catalysed reaction is L-seryl-[protein] + ATP = O-phospho-L-seryl-[protein] + ADP + H(+). It carries out the reaction L-threonyl-[protein] + ATP = O-phospho-L-threonyl-[protein] + ADP + H(+). Activated by PDPK1/PDK1. Its function is as follows. Functions redudantly with AGC1-5 as signaling component in the pollen tube. Required for polarized growth of pollen tubes. The chain is Serine/threonine-protein kinase AGC1-7 from Arabidopsis thaliana (Mouse-ear cress).